Consider the following 1578-residue polypeptide: Cilia- and flagella-associated protein 74 (1578 aa).

Over residues 1–14 (MEEPTVQFSDEDLV) the composition is skewed to acidic residues. Disordered stretches follow at residues 1–21 (MEEP…PPMD) and 33–67 (EVER…TTKD). The span at 33–65 (EVERPSEGLEDEGSHSSAKKESKGAEKMRKSTT) shows a compositional bias: basic and acidic residues. Coiled-coil stretches lie at residues 103 to 156 (RQRM…QSKI) and 330 to 378 (KYLF…RRQH).

The protein belongs to the CFAP74 family.

It is found in the cytoplasm. The protein resides in the cytoskeleton. Its subcellular location is the cilium axoneme. The protein localises to the flagellum axoneme. Its function is as follows. As part of the central apparatus of the cilium axoneme may play a role in cilium movement. May play an important role in sperm architecture and function. This Mus musculus (Mouse) protein is Cilia- and flagella-associated protein 74.